Consider the following 87-residue polypeptide: Small ribosomal subunit protein bS20 (87 aa).

The tract at residues 1–26 (MANIKSAKKRAVQSEKARKHNASRRS) is disordered.

It belongs to the bacterial ribosomal protein bS20 family.

Binds directly to 16S ribosomal RNA. This is Small ribosomal subunit protein bS20 from Enterobacter sp. (strain 638).